Here is a 403-residue protein sequence, read N- to C-terminus: MGIRAFLDKIEHHFEKGGKYEKWYALYEAADTFLYRPGSVTKTTAHVRDGIDLKRMMITVWLCTFPAMFFGMWNTGYQANLIYAQSPDLLAAQEGWRFALIGAFAGFDPNSLWDNFIQGAAYFLPIYAVTFIVGGFWEVLFASIRKHEVNEGFFVTSVLFALILPPTIPLWQVALGISFGVVIGKEIFGGTGKNFLNPALTARAFLFFAYPAQMSGDAVWTAVDGYAGATALSLGFAGGIENVISSGITWMDAFVGTIHGSIGETSTLAIFIGGAVLIGSKIASWRIVTGVMLGMIALSTLFNLIGSETNPLFGMPWYWHMVVGGFAFGMIFMATDPVSASMTNTGKWVFGILIGVMVVLIRVVNPAFPEGMMLAILFANLCAPLIDHFVIQANIKRRLARNV.

9 consecutive transmembrane segments (helical) span residues 56–76 (MMITVWLCTFPAMFFGMWNTG), 121–141 (AYFLPIYAVTFIVGGFWEVLF), 163–183 (ILPPTIPLWQVALGISFGVVI), 220–240 (WTAVDGYAGATALSLGFAGGI), 258–278 (IHGSIGETSTLAIFIGGAVLI), 287–307 (IVTGVMLGMIALSTLFNLIGS), 312–332 (LFGMPWYWHMVVGGFAFGMIF), 348–368 (WVFGILIGVMVVLIRVVNPAF), and 371–391 (GMMLAILFANLCAPLIDHFVI). Threonine 230 carries the FMN phosphoryl threonine modification.

Belongs to the NqrB/RnfD family. In terms of assembly, composed of six subunits; NqrA, NqrB, NqrC, NqrD, NqrE and NqrF. It depends on FMN as a cofactor.

Its subcellular location is the cell inner membrane. The catalysed reaction is a ubiquinone + n Na(+)(in) + NADH + H(+) = a ubiquinol + n Na(+)(out) + NAD(+). Functionally, NQR complex catalyzes the reduction of ubiquinone-1 to ubiquinol by two successive reactions, coupled with the transport of Na(+) ions from the cytoplasm to the periplasm. NqrA to NqrE are probably involved in the second step, the conversion of ubisemiquinone to ubiquinol. This chain is Na(+)-translocating NADH-quinone reductase subunit B, found in Stutzerimonas stutzeri (strain A1501) (Pseudomonas stutzeri).